The chain runs to 249 residues: ATP synthase subunits region ORF 6 (249 aa).

This is ATP synthase subunits region ORF 6 from Fuscovulum blasticum (Rhodobacter blasticus).